Here is a 428-residue protein sequence, read N- to C-terminus: Cysteine--tRNA ligase (428 aa).

A Zn(2+)-binding site is contributed by cysteine 23. The 'HIGH' region motif lies at 25–35 (PTVYNDLHLGN). Zn(2+)-binding residues include cysteine 196, histidine 221, and glutamate 225. Positions 253-257 (KMSKS) match the 'KMSKS' region motif. Lysine 256 is an ATP binding site.

This sequence belongs to the class-I aminoacyl-tRNA synthetase family. Monomer. The cofactor is Zn(2+).

Its subcellular location is the cytoplasm. It catalyses the reaction tRNA(Cys) + L-cysteine + ATP = L-cysteinyl-tRNA(Cys) + AMP + diphosphate. In Mycoplasma genitalium (strain ATCC 33530 / DSM 19775 / NCTC 10195 / G37) (Mycoplasmoides genitalium), this protein is Cysteine--tRNA ligase (cysS).